We begin with the raw amino-acid sequence, 216 residues long: Orotate phosphoribosyltransferase (216 aa).

Position 30 (K30) interacts with 5-phospho-alpha-D-ribose 1-diphosphate. 38–39 (FF) provides a ligand contact to orotate. 5-phospho-alpha-D-ribose 1-diphosphate-binding positions include 75–76 (YK), R102, K103, K106, H108, and 128–136 (DDVITAGTA). Positions 132 and 160 each coordinate orotate.

It belongs to the purine/pyrimidine phosphoribosyltransferase family. PyrE subfamily. As to quaternary structure, homodimer. It depends on Mg(2+) as a cofactor.

The enzyme catalyses orotidine 5'-phosphate + diphosphate = orotate + 5-phospho-alpha-D-ribose 1-diphosphate. The protein operates within pyrimidine metabolism; UMP biosynthesis via de novo pathway; UMP from orotate: step 1/2. In terms of biological role, catalyzes the transfer of a ribosyl phosphate group from 5-phosphoribose 1-diphosphate to orotate, leading to the formation of orotidine monophosphate (OMP). This chain is Orotate phosphoribosyltransferase, found in Acinetobacter baylyi (strain ATCC 33305 / BD413 / ADP1).